Reading from the N-terminus, the 113-residue chain is T cell receptor alpha variable 13-2 (113 aa).

Residues 1-21 form the signal peptide; that stretch reads MAGIRALFMYLWLQLDWVSRG. The Ig-like domain occupies 22–113; that stretch reads ESVGLHLPTL…DSAVYFCAEN (92 aa). Cysteine 43 and cysteine 110 are disulfide-bonded. N-linked (GlcNAc...) asparagine glycosylation occurs at asparagine 87.

As to quaternary structure, alpha-beta TR is a heterodimer composed of an alpha and beta chain; disulfide-linked. The alpha-beta TR is associated with the transmembrane signaling CD3 coreceptor proteins to form the TR-CD3 (TcR or TCR). The assembly of alpha-beta TR heterodimers with CD3 occurs in the endoplasmic reticulum where a single alpha-beta TR heterodimer associates with one CD3D-CD3E heterodimer, one CD3G-CD3E heterodimer and one CD247 homodimer forming a stable octameric structure. CD3D-CD3E and CD3G-CD3E heterodimers preferentially associate with TR alpha and TR beta chains, respectively. The association of the CD247 homodimer is the last step of TcR assembly in the endoplasmic reticulum and is required for transport to the cell surface.

It localises to the cell membrane. V region of the variable domain of T cell receptor (TR) alpha chain that participates in the antigen recognition. Alpha-beta T cell receptors are antigen specific receptors which are essential to the immune response and are present on the cell surface of T lymphocytes. Recognize peptide-major histocompatibility (MH) (pMH) complexes that are displayed by antigen presenting cells (APC), a prerequisite for efficient T cell adaptive immunity against pathogens. Binding of alpha-beta TR to pMH complex initiates TR-CD3 clustering on the cell surface and intracellular activation of LCK that phosphorylates the ITAM motifs of CD3G, CD3D, CD3E and CD247 enabling the recruitment of ZAP70. In turn ZAP70 phosphorylates LAT, which recruits numerous signaling molecules to form the LAT signalosome. The LAT signalosome propagates signal branching to three major signaling pathways, the calcium, the mitogen-activated protein kinase (MAPK) kinase and the nuclear factor NF-kappa-B (NF-kB) pathways, leading to the mobilization of transcription factors that are critical for gene expression and essential for T cell growth and differentiation. The T cell repertoire is generated in the thymus, by V-(D)-J rearrangement. This repertoire is then shaped by intrathymic selection events to generate a peripheral T cell pool of self-MH restricted, non-autoaggressive T cells. Post-thymic interaction of alpha-beta TR with the pMH complexes shapes TR structural and functional avidity. The sequence is that of T cell receptor alpha variable 13-2 from Homo sapiens (Human).